Here is a 244-residue protein sequence, read N- to C-terminus: Mitochondrial inner membrane protease atp23 (244 aa).

The disordered stretch occupies residues 1–22; that stretch reads MASTDDNKPPTASDFAKDAEPQ. Histidine 144 is an a divalent metal cation binding site. Residue glutamate 145 is part of the active site. A divalent metal cation is bound at residue histidine 148.

This sequence belongs to the peptidase M76 family.

The protein resides in the mitochondrion inner membrane. Functionally, has a dual role in the assembly of mitochondrial ATPase. Acts as a protease that removes N-terminal residues of mitochondrial ATPase CF(0) subunit 6 at the intermembrane space side. Also involved in the correct assembly of the membrane-embedded ATPase CF(0) particle, probably mediating association of subunit 6 with the subunit 9 ring. The polypeptide is Mitochondrial inner membrane protease atp23 (atp23) (Sclerotinia sclerotiorum (strain ATCC 18683 / 1980 / Ss-1) (White mold)).